A 173-amino-acid chain; its full sequence is Microfibrillar-associated protein 5 (173 aa).

The signal sequence occupies residues methionine 1–tryptophan 21. The Cell attachment site motif lies at arginine 30 to aspartate 32. Threonine 54 carries an O-linked (GalNAc...) threonine glycan. Residue asparagine 79 is glycosylated (N-linked (GlcNAc...) asparagine).

This sequence belongs to the MFAP family. Interacts with TGFB2. Interacts with BMP2. Interacts with FBN1 (via N-terminal domain) and FBN2. Forms intermolecular disulfide bonds either with other MAGP-2 molecules or with other components of the microfibrils. Post-translationally, N- and O-glycosylated. O-glycosylated with core 1 or possibly core 8 glycans. O-glycan heterogeneity at Thr-54: HexHexNAc (major) and HexHexNAc + sulfate (minor).

The protein resides in the secreted. It localises to the extracellular space. Its subcellular location is the extracellular matrix. In terms of biological role, may play a role in hematopoiesis. In the cardiovascular system, could regulate growth factors or participate in cell signaling in maintaining large vessel integrity. Component of the elastin-associated microfibrils. The protein is Microfibrillar-associated protein 5 (MFAP5) of Homo sapiens (Human).